Consider the following 106-residue polypeptide: MPFLDIQKRFGLNIDRWWTIQSAEQPYKLAPRCHAFEKEWIECAHGIGAIRAEKECKIEYDDFIECLLRQKTMRRVNAIRRQRDKLIKEGKYTPPPHHIGKGEPRP.

A CHCH domain is found at 30–74 (APRCHAFEKEWIECAHGIGAIRAEKECKIEYDDFIECLLRQKTMR). Short sequence motifs (cx9C motif) lie at residues 33 to 43 (CHAFEKEWIEC) and 56 to 66 (CKIEYDDFIEC). 2 cysteine pairs are disulfide-bonded: Cys33/Cys66 and Cys43/Cys56. The segment at 87 to 106 (IKEGKYTPPPHHIGKGEPRP) is disordered.

It belongs to the complex I NDUFS5 subunit family. Mammalian complex I is composed of 45 different subunits. This is a component of the iron-sulfur (IP) fragment of the enzyme.

The protein localises to the mitochondrion inner membrane. It localises to the mitochondrion intermembrane space. Functionally, accessory subunit of the mitochondrial membrane respiratory chain NADH dehydrogenase (Complex I), that is believed not to be involved in catalysis. Complex I functions in the transfer of electrons from NADH to the respiratory chain. The immediate electron acceptor for the enzyme is believed to be ubiquinone. The sequence is that of NADH dehydrogenase [ubiquinone] iron-sulfur protein 5 (NDUFS5) from Macaca fascicularis (Crab-eating macaque).